We begin with the raw amino-acid sequence, 316 residues long: Apolipoprotein E (316 aa).

Positions 1–18 (MKALWAVLVVTLLAGCLA) are cleaved as a signal peptide. Tandem repeats lie at residues 76–97 (VLME…EQLG), 98–119 (PMAE…SRLG), 120–141 (ADME…TMLG), 142–163 (QSTE…KRLM), 164–185 (RDAE…EGAE), 186–207 (RGVG…QRTA), 208–229 (NLGA…ARIR), and 230–251 (GRLE…EQME). The 8 X 22 AA approximate tandem repeats stretch occupies residues 76–251 (VLMEDTMTEL…RLEEVREQME (176 aa)). Residue M139 is modified to Methionine sulfoxide. Residue S143 is modified to Phosphoserine. The LDL and other lipoprotein receptors binding stretch occupies residues 154–164 (HLRKLRKRLMR). 158-161 (LRKR) contacts heparin. The lipid-binding and lipoprotein association stretch occupies residues 206–286 (TANLGAGAGK…GWFEPLVEDM (81 aa)). Residue 225–232 (GARIRGRL) participates in heparin binding. A homooligomerization region spans residues 262 to 316 (QQMRLQAEIFQARLKGWFEPLVEDMQRQWANLVEKIQASVAANPIPPSSVPQESQ). The tract at residues 274 to 286 (RLKGWFEPLVEDM) is specificity for association with VLDL.

It belongs to the apolipoprotein A1/A4/E family. In terms of assembly, homotetramer. May interact with ABCA1; functionally associated with ABCA1 in the biogenesis of HDLs. May interact with APP/A4 amyloid-beta peptide; the interaction is extremely stable in vitro but its physiological significance is unclear. May interact with MAPT. May interact with MAP2. In the cerebrospinal fluid, interacts with secreted SORL1. Interacts with PMEL; this allows the loading of PMEL luminal fragment on ILVs to induce fibril nucleation. APOE exists as multiple glycosylated and sialylated glycoforms within cells and in plasma. The extent of glycosylation and sialylation are tissue and context specific. In terms of processing, glycated in plasma VLDL. Post-translationally, phosphorylated by FAM20C in the extracellular medium.

The protein resides in the secreted. The protein localises to the extracellular space. Its subcellular location is the extracellular matrix. It localises to the extracellular vesicle. It is found in the endosome. The protein resides in the multivesicular body. In terms of biological role, APOE is an apolipoprotein, a protein associating with lipid particles, that mainly functions in lipoprotein-mediated lipid transport between organs via the plasma and interstitial fluids. APOE is a core component of plasma lipoproteins and is involved in their production, conversion and clearance. Apolipoproteins are amphipathic molecules that interact both with lipids of the lipoprotein particle core and the aqueous environment of the plasma. As such, APOE associates with chylomicrons, chylomicron remnants, very low density lipoproteins (VLDL) and intermediate density lipoproteins (IDL) but shows a preferential binding to high-density lipoproteins (HDL). It also binds a wide range of cellular receptors including the LDL receptor/LDLR, the LDL receptor-related proteins LRP1, LRP2 and LRP8 and the very low-density lipoprotein receptor/VLDLR that mediate the cellular uptake of the APOE-containing lipoprotein particles. Finally, APOE also has a heparin-binding activity and binds heparan-sulfate proteoglycans on the surface of cells, a property that supports the capture and the receptor-mediated uptake of APOE-containing lipoproteins by cells. A main function of APOE is to mediate lipoprotein clearance through the uptake of chylomicrons, VLDLs, and HDLs by hepatocytes. APOE is also involved in the biosynthesis by the liver of VLDLs as well as their uptake by peripheral tissues ensuring the delivery of triglycerides and energy storage in muscle, heart and adipose tissues. By participating in the lipoprotein-mediated distribution of lipids among tissues, APOE plays a critical role in plasma and tissues lipid homeostasis. APOE is also involved in two steps of reverse cholesterol transport, the HDLs-mediated transport of cholesterol from peripheral tissues to the liver, and thereby plays an important role in cholesterol homeostasis. First, it is functionally associated with ABCA1 in the biogenesis of HDLs in tissues. Second, it is enriched in circulating HDLs and mediates their uptake by hepatocytes. APOE also plays an important role in lipid transport in the central nervous system, regulating neuron survival and sprouting. This Onychomys torridus (Southern grasshopper mouse) protein is Apolipoprotein E (Apoe).